We begin with the raw amino-acid sequence, 256 residues long: MPPAQGYEFAAAKGPRDELGPSFPMASPPGLELKTLSNGPQAPRRSAPLGPVAPTREGVENACFSSEEHETHFQNPGNTRLGSSPSPPGGVSSLPRSQRDDLSLHSEEGPALEPVSRPVDYGFVSALVFLVSGILLVVTAYAIPREARVNPDTVTAREMERLEMYYARLGSHLDRCIIAGLGLLTVGGMLLSVLLMVSLCKGELYRRRTFVPGKGSRKTYGSINLRMRQLNGDGGQALVENEVVQVSETSHTLQRS.

Residues 1 to 111 (MPPAQGYEFA…LSLHSEEGPA (111 aa)) are disordered. The span at 80–96 (RLGSSPSPPGGVSSLPR) shows a compositional bias: low complexity. Positions 97–108 (SQRDDLSLHSEE) are enriched in basic and acidic residues. Transmembrane regions (helical) follow at residues 123–143 (FVSA…AYAI) and 177–197 (IIAG…LLMV).

Belongs to the TMEM74 family.

It is found in the membrane. The chain is Transmembrane protein 74B (TMEM74B) from Homo sapiens (Human).